Reading from the N-terminus, the 303-residue chain is tRNA dimethylallyltransferase (303 aa).

An ATP-binding site is contributed by 9–16; the sequence is GPTAVGKT. 11 to 16 contributes to the substrate binding site; sequence TAVGKT. An interaction with substrate tRNA region spans residues 34-37; it reads DSRQ.

It belongs to the IPP transferase family. Monomer. Mg(2+) is required as a cofactor.

It catalyses the reaction adenosine(37) in tRNA + dimethylallyl diphosphate = N(6)-dimethylallyladenosine(37) in tRNA + diphosphate. In terms of biological role, catalyzes the transfer of a dimethylallyl group onto the adenine at position 37 in tRNAs that read codons beginning with uridine, leading to the formation of N6-(dimethylallyl)adenosine (i(6)A). This Petrotoga mobilis (strain DSM 10674 / SJ95) protein is tRNA dimethylallyltransferase.